A 431-amino-acid chain; its full sequence is Enolase (431 aa).

Gln-167 is a (2R)-2-phosphoglycerate binding site. Glu-209 serves as the catalytic Proton donor. Positions 246, 290, and 317 each coordinate Mg(2+). Lys-342, Arg-371, Ser-372, and Lys-393 together coordinate (2R)-2-phosphoglycerate. Lys-342 functions as the Proton acceptor in the catalytic mechanism.

The protein belongs to the enolase family. Component of the RNA degradosome, a multiprotein complex involved in RNA processing and mRNA degradation. It depends on Mg(2+) as a cofactor.

It is found in the cytoplasm. The protein resides in the secreted. Its subcellular location is the cell surface. It carries out the reaction (2R)-2-phosphoglycerate = phosphoenolpyruvate + H2O. It functions in the pathway carbohydrate degradation; glycolysis; pyruvate from D-glyceraldehyde 3-phosphate: step 4/5. In terms of biological role, catalyzes the reversible conversion of 2-phosphoglycerate (2-PG) into phosphoenolpyruvate (PEP). It is essential for the degradation of carbohydrates via glycolysis. This is Enolase from Pectobacterium atrosepticum (strain SCRI 1043 / ATCC BAA-672) (Erwinia carotovora subsp. atroseptica).